Consider the following 497-residue polypeptide: Serine/threonine-protein kinase 3 (497 aa).

N-acetylmethionine is present on Met-1. Positions 1-20 are disordered; that stretch reads MEQPPASKSKLKKLSEDSLT. Ser-15 is modified (phosphoserine). Residues 27 to 278 form the Protein kinase domain; the sequence is FDVLEKLGEG…ATQLLQHPFI (252 aa). ATP-binding positions include 33–41 and Lys-56; that span reads LGEGSYGSV. At Thr-117 the chain carries Phosphothreonine; by PKB/AKT1. Residue Asp-146 is the Proton acceptor of the active site. Mg(2+)-binding residues include Asn-151 and Asp-164. Thr-180 is modified (phosphothreonine; by autocatalysis). Residues 287–328 are a coiled coil; sequence LRDLIAEAMEIKAKRHEEQQRELEEEEENSDEDELDSHTMVK. Disordered regions lie at residues 301-343 and 368-394; these read RHEE…TSTM and NSEE…SPQV. Residues 309–321 are compositionally biased toward acidic residues; the sequence is LEEEEENSDEDEL. Ser-316 bears the Phosphoserine mark. The segment covering 326 to 343 has biased composition (polar residues); the sequence is MVKTSSESVGTMRATSTM. Position 336 is a phosphothreonine (Thr-336). Residues 366–387 are a coiled coil; it reads VINSEEEEEEEEEEEEDGTMKR. A compositionally biased stretch (acidic residues) spans 369 to 382; the sequence is SEEEEEEEEEEEED. Phosphothreonine is present on Thr-384. The residue at position 390 (Thr-390) is a Phosphothreonine; by PKB/AKT1. Phosphoserine is present on residues Ser-391 and Ser-450. The 48-residue stretch at 443-490 folds into the SARAH domain; sequence FDFLKNLSLEELQMRLKALDPMMEREIEELHQRYSAKRQPILDAMDAK. Residues 448 to 479 are a coiled coil; that stretch reads NLSLEELQMRLKALDPMMEREIEELHQRYSAK.

Belongs to the protein kinase superfamily. STE Ser/Thr protein kinase family. STE20 subfamily. As to quaternary structure, homodimer; mediated via the coiled-coil region. Interacts with NORE1, which inhibits autoactivation. Interacts with and stabilizes SAV1. Interacts with RAF1, which prevents dimerization and phosphorylation. Interacts with RASSF1. Interacts (via SARAH domain) with isoform 1 of NEK2. Interacts with ESR1 only in the presence of SAV1. Interacts with PKB/AKT1. Forms a tripartite complex with MOBKL1B and STK38. Interacts with RASSF2 (via SARAH domain). Interacts with DLG5 (via PDZ domain 3). Interacts with LATS1; this interaction is inhibited in the presence of DLG5. Interacts with MARK3 in the presence of DLG5. Interacts with RASSF5; this interaction inhibits STK3 autoactivation through heterodimerization. Interacts (when phosphorylated) with SLMAP (via FHA domain); the interaction associates STK3 with the STRIPAK complex. It depends on Mg(2+) as a cofactor. Post-translationally, autophosphorylated on two residues Thr-174 and Thr-180, leading to activation. Phosphorylation at Thr-117 and Thr-390 by PKB/AKT1, leads to inhibition of its: cleavage, kinase activity, autophosphorylation at Thr-180, binding to RASSF1 and nuclear translocation, and increase in its binding to RAF1. Phosphorylated at Ser-15 by PLK1, leading to activation. Proteolytically cleaved by caspase-3 during apoptosis. Proteolytic cleavage results in kinase activation and nuclear translocation of the truncated form (MST1/N). In terms of processing, ubiquitinated by TRIM69; leading to its redistribution to the perinuclear cytoskeleton.

It is found in the cytoplasm. The protein localises to the nucleus. It catalyses the reaction L-seryl-[protein] + ATP = O-phospho-L-seryl-[protein] + ADP + H(+). It carries out the reaction L-threonyl-[protein] + ATP = O-phospho-L-threonyl-[protein] + ADP + H(+). Its activity is regulated as follows. Inhibited by the C-terminal non-catalytic region. Activated by caspase-cleavage. Full activation also requires homodimerization and autophosphorylation of Thr-180, which are inhibited by the proto-oncogene product RAF1. Activated by RASSF1 which acts by preventing its dephosphorylation. When autophosphorylated at Thr-180, recruits STRIPAK complex and promotes PP2A-mediated dephosphorylation and inactivation of STK3. In terms of biological role, stress-activated, pro-apoptotic kinase which, following caspase-cleavage, enters the nucleus and induces chromatin condensation followed by internucleosomal DNA fragmentation. Key component of the Hippo signaling pathway which plays a pivotal role in organ size control and tumor suppression by restricting proliferation and promoting apoptosis. The core of this pathway is composed of a kinase cascade wherein STK3/MST2 and STK4/MST1, in complex with its regulatory protein SAV1, phosphorylates and activates LATS1/2 in complex with its regulatory protein MOB1, which in turn phosphorylates and inactivates YAP1 oncoprotein and WWTR1/TAZ. Phosphorylation of YAP1 by LATS2 inhibits its translocation into the nucleus to regulate cellular genes important for cell proliferation, cell death, and cell migration. STK3/MST2 and STK4/MST1 are required to repress proliferation of mature hepatocytes, to prevent activation of facultative adult liver stem cells (oval cells), and to inhibit tumor formation. Phosphorylates NKX2-1. Phosphorylates NEK2 and plays a role in centrosome disjunction by regulating the localization of NEK2 to centrosomes, and its ability to phosphorylate CROCC and CEP250. In conjunction with SAV1, activates the transcriptional activity of ESR1 through the modulation of its phosphorylation. Positively regulates RAF1 activation via suppression of the inhibitory phosphorylation of RAF1 on 'Ser-259'. Phosphorylates MOBKL1A and RASSF2. Phosphorylates MOBKL1B on 'Thr-74'. Acts cooperatively with MOBKL1B to activate STK38. The protein is Serine/threonine-protein kinase 3 (Stk3) of Mus musculus (Mouse).